Here is a 678-residue protein sequence, read N- to C-terminus: ERAD-associated E3 ubiquitin-protein ligase component HRD3A (678 aa).

The N-terminal stretch at 1–25 (MRILSYGIVILSLLVFSFIEFGVHA) is a signal peptide. A disordered region spans residues 40 to 71 (GGDDNGVGESSDFDEFGESEPKSEEELDPGSW). Sel1-like repeat units lie at residues 124 to 159 (PHAQ…AGGN), 242 to 277 (ANAM…VDKG), 279 to 313 (PRSM…AKEG), 317 to 349 (AFNG…AVDN), 353 to 386 (SGHY…ANAG), 388 to 422 (PKAF…AERG), 506 to 537 (AALL…AKSQ), and 540 to 568 (AQAM…RYYD). N-linked (GlcNAc...) asparagine glycosylation is found at Asn298 and Asn335. A helical membrane pass occupies residues 620–640 (VVFEEGNATILTLFVCLITIL).

Belongs to the sel-1 family. As to quaternary structure, interacts with OS9.

The protein resides in the endoplasmic reticulum membrane. Component of the endoplasmic reticulum (ER) quality control system called ER-associated degradation (ERAD) and involved in ubiquitin-dependent degradation of misfolded endoplasmic reticulum proteins. Functions as an ERAD substrate-recruiting factor that recognizes misfolded proteins for the HRD1 E3 ubiquitin ligase complex. Targets the misfolded LRR receptor kinase BRI1. In Arabidopsis thaliana (Mouse-ear cress), this protein is ERAD-associated E3 ubiquitin-protein ligase component HRD3A.